Consider the following 938-residue polypeptide: Cyclin-dependent kinase-like 5 (938 aa).

Residues phenylalanine 13–phenylalanine 297 enclose the Protein kinase domain. Residues valine 19 to valine 27 and lysine 42 each bind ATP. Residue aspartate 135 is the Proton acceptor of the active site. Disordered regions lie at residues glutamine 298–asparagine 348, lysine 382–lysine 566, serine 646–glutamine 865, and histidine 877–glutamine 938. Composition is skewed to polar residues over residues glutamate 319–lysine 331 and lysine 382–isoleucine 402. Serine 407 is modified (phosphoserine). Over residues serine 407–phenylalanine 417 the composition is skewed to basic and acidic residues. Polar residues-rich tracts occupy residues leucine 434–glutamate 462, isoleucine 473–tyrosine 482, and aspartate 494–asparagine 548. At serine 479 the chain carries Phosphoserine. 2 stretches are compositionally biased toward basic and acidic residues: residues asparagine 549 to arginine 559 and glutamine 679 to tyrosine 704. Serine 720 carries the post-translational modification Phosphoserine. Over residues histidine 728–asparagine 748 the composition is skewed to polar residues. A Phosphoserine modification is found at serine 761. Basic and acidic residues-rich tracts occupy residues aspartate 769–glycine 778 and arginine 817–serine 827. Residues serine 880 to glutamine 891 show a composition bias toward polar residues.

The protein belongs to the protein kinase superfamily. CMGC Ser/Thr protein kinase family. CDC2/CDKX subfamily. Interacts with MECP2. Post-translationally, autophosphorylated.

The protein resides in the nucleus. Its subcellular location is the cytoplasm. It is found in the cytoskeleton. It localises to the cilium basal body. The protein localises to the microtubule organizing center. The protein resides in the centrosome. The catalysed reaction is L-seryl-[protein] + ATP = O-phospho-L-seryl-[protein] + ADP + H(+). It carries out the reaction L-threonyl-[protein] + ATP = O-phospho-L-threonyl-[protein] + ADP + H(+). Its function is as follows. Mediates phosphorylation of MECP2. May regulate ciliogenesis. This Mus musculus (Mouse) protein is Cyclin-dependent kinase-like 5.